The primary structure comprises 438 residues: 3-phosphoshikimate 1-carboxyvinyltransferase (438 aa).

The 3-phosphoshikimate site is built by Lys-23, Ser-24, and Arg-28. Residue Lys-23 participates in phosphoenolpyruvate binding. Residues Gly-94 and Arg-122 each contribute to the phosphoenolpyruvate site. 4 residues coordinate 3-phosphoshikimate: Ser-167, Gln-169, Asp-321, and Lys-348. Gln-169 is a binding site for phosphoenolpyruvate. The Proton acceptor role is filled by Asp-321. Phosphoenolpyruvate-binding residues include Arg-352 and Arg-393.

It belongs to the EPSP synthase family. In terms of assembly, monomer.

It is found in the cytoplasm. It carries out the reaction 3-phosphoshikimate + phosphoenolpyruvate = 5-O-(1-carboxyvinyl)-3-phosphoshikimate + phosphate. It functions in the pathway metabolic intermediate biosynthesis; chorismate biosynthesis; chorismate from D-erythrose 4-phosphate and phosphoenolpyruvate: step 6/7. In terms of biological role, catalyzes the transfer of the enolpyruvyl moiety of phosphoenolpyruvate (PEP) to the 5-hydroxyl of shikimate-3-phosphate (S3P) to produce enolpyruvyl shikimate-3-phosphate and inorganic phosphate. This Helicobacter hepaticus (strain ATCC 51449 / 3B1) protein is 3-phosphoshikimate 1-carboxyvinyltransferase.